The sequence spans 323 residues: Pantothenate kinase (323 aa).

101–108 (GSVAVGKS) lines the ATP pocket.

The protein belongs to the prokaryotic pantothenate kinase family.

It is found in the cytoplasm. It catalyses the reaction (R)-pantothenate + ATP = (R)-4'-phosphopantothenate + ADP + H(+). Its pathway is cofactor biosynthesis; coenzyme A biosynthesis; CoA from (R)-pantothenate: step 1/5. This Paenarthrobacter aurescens (strain TC1) protein is Pantothenate kinase.